Reading from the N-terminus, the 229-residue chain is MTVSLTTAELAKYIDATALKADTSEADVRRLVAESREAGVKSVCINPVWVPLVAAELADSDVLTCTVIGFPLGANTSEVKAFEARQAIDAGADEVDMVIDVAAARAGDRARLVSDVRAVAEAAHADGPAGDGGALLKVIVETALLDDDAIVLACEAAVEAGADFVKTSTGFSTAGATVEHVALMRRTVGEGIGVKASGGVRTREDALAMIEAGATRIGASSALAILGSD.

The Proton donor/acceptor role is filled by D96. K166 serves as the catalytic Schiff-base intermediate with acetaldehyde. The Proton donor/acceptor role is filled by K195.

This sequence belongs to the DeoC/FbaB aldolase family. DeoC type 1 subfamily.

It localises to the cytoplasm. It catalyses the reaction 2-deoxy-D-ribose 5-phosphate = D-glyceraldehyde 3-phosphate + acetaldehyde. The protein operates within carbohydrate degradation; 2-deoxy-D-ribose 1-phosphate degradation; D-glyceraldehyde 3-phosphate and acetaldehyde from 2-deoxy-alpha-D-ribose 1-phosphate: step 2/2. Its function is as follows. Catalyzes a reversible aldol reaction between acetaldehyde and D-glyceraldehyde 3-phosphate to generate 2-deoxy-D-ribose 5-phosphate. The sequence is that of Deoxyribose-phosphate aldolase from Micrococcus luteus (strain ATCC 4698 / DSM 20030 / JCM 1464 / CCM 169 / CCUG 5858 / IAM 1056 / NBRC 3333 / NCIMB 9278 / NCTC 2665 / VKM Ac-2230) (Micrococcus lysodeikticus).